We begin with the raw amino-acid sequence, 423 residues long: Kynureninase (423 aa).

Pyridoxal 5'-phosphate is bound by residues L105, S106, 133-136 (FPSD), D218, H221, and Y243. At K244 the chain carries N6-(pyridoxal phosphate)lysine. Residues W273 and N301 each coordinate pyridoxal 5'-phosphate.

This sequence belongs to the kynureninase family. Homodimer. Pyridoxal 5'-phosphate serves as cofactor.

The catalysed reaction is L-kynurenine + H2O = anthranilate + L-alanine + H(+). It catalyses the reaction 3-hydroxy-L-kynurenine + H2O = 3-hydroxyanthranilate + L-alanine + H(+). It functions in the pathway amino-acid degradation; L-kynurenine degradation; L-alanine and anthranilate from L-kynurenine: step 1/1. It participates in cofactor biosynthesis; NAD(+) biosynthesis; quinolinate from L-kynurenine: step 2/3. Its function is as follows. Catalyzes the cleavage of L-kynurenine (L-Kyn) and L-3-hydroxykynurenine (L-3OHKyn) into anthranilic acid (AA) and 3-hydroxyanthranilic acid (3-OHAA), respectively. The polypeptide is Kynureninase (Xanthomonas euvesicatoria pv. vesicatoria (strain 85-10) (Xanthomonas campestris pv. vesicatoria)).